The primary structure comprises 102 residues: NADH-quinone oxidoreductase subunit K (102 aa).

The next 3 membrane-spanning stretches (helical) occupy residues 2–22 (LDFY…GVIL), 26–46 (IFTI…IFAT), and 58–78 (VIVM…LALI).

The protein belongs to the complex I subunit 4L family. As to quaternary structure, NDH-1 is composed of 14 different subunits. Subunits NuoA, H, J, K, L, M, N constitute the membrane sector of the complex.

It localises to the cell inner membrane. The enzyme catalyses a quinone + NADH + 5 H(+)(in) = a quinol + NAD(+) + 4 H(+)(out). Functionally, NDH-1 shuttles electrons from NADH, via FMN and iron-sulfur (Fe-S) centers, to quinones in the respiratory chain. The immediate electron acceptor for the enzyme in this species is believed to be ubiquinone. Couples the redox reaction to proton translocation (for every two electrons transferred, four hydrogen ions are translocated across the cytoplasmic membrane), and thus conserves the redox energy in a proton gradient. This is NADH-quinone oxidoreductase subunit K from Campylobacter fetus subsp. fetus (strain 82-40).